Reading from the N-terminus, the 322-residue chain is Pantothenate kinase (322 aa).

Position 104-111 (104-111) interacts with ATP; it reads GSVAVGKS.

The protein belongs to the prokaryotic pantothenate kinase family.

Its subcellular location is the cytoplasm. It carries out the reaction (R)-pantothenate + ATP = (R)-4'-phosphopantothenate + ADP + H(+). Its pathway is cofactor biosynthesis; coenzyme A biosynthesis; CoA from (R)-pantothenate: step 1/5. The sequence is that of Pantothenate kinase from Leifsonia xyli subsp. xyli (strain CTCB07).